Here is a 269-residue protein sequence, read N- to C-terminus: Proenkephalin-A (269 aa).

The signal sequence occupies residues 1–24; that stretch reads MAQFLRLCIWLLALGSCLLATVQA. 3 disulfides stabilise this stretch: Cys-26–Cys-48, Cys-30–Cys-52, and Cys-33–Cys-65. A disordered region spans residues 165-191; the sequence is DNRAKDSHQQESTNNDEDSTSKRYGGF. 2 consecutive propeptides follow at residues 198–209 and 219–229; these read SPQLEDEAKELQ and VGRPEWWMDYQ. Residue Ser-253 is modified to Phosphoserine.

This sequence belongs to the opioid neuropeptide precursor family. In terms of processing, proenkephalin-A is cleaved by CTSL to generate Met-enkephalin. Processed and degraded by ACE. Post-translationally, probably cleaved by ACE. In terms of processing, processed by ACE to generate Met-enkephalin in the nucleus accumbens of the brain. The N-terminal domain contains 6 conserved cysteines thought to be involved in disulfide bonding and/or processing. As to expression, expressed in brain, heart and testis.

The protein localises to the secreted. Its subcellular location is the cytoplasmic vesicle. It localises to the secretory vesicle. It is found in the chromaffin granule lumen. Functionally, neuropeptide that competes with and mimic the effects of opiate drugs. They play a role in a number of physiologic functions, including pain perception and responses to stress. In terms of biological role, met-enkephalin-Arg-Phe neuropeptide acts as a strong ligand of Mu-type opioid receptor OPRM1. Met-enkephalin-Arg-Phe-binding to OPRM1 in the nucleus accumbens of the brain increases activation of OPRM1, leading to long-term synaptic depression of glutamate release. Increases glutamate release in the striatum and decreases GABA concentration in the striatum. Its function is as follows. Increases glutamate release in the striatum. The sequence is that of Proenkephalin-A (Penk) from Rattus norvegicus (Rat).